The chain runs to 377 residues: Serine protease grass (377 aa).

An N-terminal signal peptide occupies residues 1–26 (MMIASSLAVLYGIAIVSSMGVQSARA). Residues 31–89 (DCTTPDGDQGQCMPFSSCRTIEERLTEAQKAGQKVPADYASYLQKALCGEFNGVRHFCC) form the Clip domain. Cystine bridges form between Cys-32-Cys-88, Cys-42-Cys-78, Cys-48-Cys-89, Cys-111-Cys-243, Cys-148-Cys-164, and Cys-188-Cys-197. The segment at 91 to 118 (SANIQHNSKVMSLFKDENFDCGNFLSQR) is linker. A Peptidase S1 domain is found at 119–373 (VSNGYEVKLS…YVQWITDTMA (255 aa)). His-163 functions as the Charge relay system in the catalytic mechanism. Ca(2+)-binding residues include Glu-179, Arg-181, Thr-184, and Asp-187. Residue Asp-223 is the Charge relay system of the active site. 2 N-linked (GlcNAc...) asparagine glycosylation sites follow: Asn-230 and Asn-270. 2 disulfides stabilise this stretch: Cys-290/Cys-304 and Cys-314/Cys-349. Ser-318 acts as the Charge relay system in catalysis.

Belongs to the peptidase S1 family. CLIP subfamily. Proteolytically cleaved by a tryspin-like protease which is likely to activate grass.

The protein resides in the secreted. Endopeptidase. Plays a key role in innate immunity by activating the Toll pathway in response to fungal and Gram-positive bacterial infections, presumably downstream of pattern-recognition receptors (PRR), such as PGRP-SA, GNBP1 and GNBP3, and upstream of spz processing enzyme SPE. In Drosophila melanogaster (Fruit fly), this protein is Serine protease grass.